The primary structure comprises 331 residues: 3'-5' exonuclease (331 aa).

Residues E27–E92 form a disordered region. Residues Q31 to N43 are compositionally biased toward polar residues. Basic and acidic residues predominate over residues K47–P67. Phosphoserine occurs at positions 80 and 88. In terms of domain architecture, 3'-5' exonuclease spans S118–E290. Residues D140, E142, and D278 each contribute to the Mg(2+) site.

This sequence belongs to the WRNexo family.

It is found in the nucleus. In terms of biological role, has exonuclease activity on both single-stranded and duplex templates bearing overhangs, but not blunt ended duplex DNA, and cleaves in a 3'-5' direction. Essential for the formation of DNA replication focal centers. Has an important role in maintaining genome stability. This is 3'-5' exonuclease from Drosophila grimshawi (Hawaiian fruit fly).